The sequence spans 648 residues: Forkhead box protein N1 (648 aa).

Residues Met1–Pro95 are disordered. Residues Ala38 to Ser50 show a composition bias toward polar residues. The span at Asp54–Ser67 shows a compositional bias: pro residues. Positions Lys271 to Asp367 form a DNA-binding region, fork-head. 3 disordered regions span residues Leu392–Pro432, His457–Pro521, and Ser629–Ala648. Over residues Gly398 to Pro412 the composition is skewed to pro residues.

As to expression, bone marrow (at protein level). Expressed in thymus and skin.

It is found in the nucleus. Its function is as follows. Transcriptional regulator which regulates the development, differentiation, and function of thymic epithelial cells (TECs) both in the prenatal and postnatal thymus. Acts as a master regulator of the TECs lineage development and is required from the onset of differentiation in progenitor TECs in the developing fetus to the final differentiation steps through which TECs mature to acquire their full functionality. Regulates, either directly or indirectly the expression of a variety of genes that mediate diverse aspects of thymus development and function, including MHC Class II, DLL4, CCL25, CTSL, CD40 and PAX1. Regulates the differentiation of the immature TECs into functional cortical TECs (cTECs) and medullary TECs (mTECs). Essential for maintenance of mTECs population in the postnatal thymus. Involved in the morphogenesis and maintenance of the three-dimensional thymic microstructure which is necessary for a fully functional thymus. Plays an important role in the maintenance of hematopoiesis and particularly T lineage progenitors within the bone marrow niche with age. Essential for the vascularization of the thymus anlage. Promotes the terminal differentiation of epithelial cells in the epidermis and hair follicles, partly by negatively regulating the activity of protein kinase C. The sequence is that of Forkhead box protein N1 (Foxn1) from Mus musculus (Mouse).